A 506-amino-acid polypeptide reads, in one-letter code: 2,3-bisphosphoglycerate-independent phosphoglycerate mutase (506 aa).

Positions 13 and 63 each coordinate Mn(2+). Catalysis depends on Ser63, which acts as the Phosphoserine intermediate. Substrate contacts are provided by residues His124, Arg153–Asp154, Arg183, Arg189, Arg254–Arg257, and Lys330. Residues Asp396, His400, Asp437, His438, and His456 each contribute to the Mn(2+) site.

This sequence belongs to the BPG-independent phosphoglycerate mutase family. In terms of assembly, monomer. The cofactor is Mn(2+).

It carries out the reaction (2R)-2-phosphoglycerate = (2R)-3-phosphoglycerate. It functions in the pathway carbohydrate degradation; glycolysis; pyruvate from D-glyceraldehyde 3-phosphate: step 3/5. Functionally, catalyzes the interconversion of 2-phosphoglycerate and 3-phosphoglycerate. This chain is 2,3-bisphosphoglycerate-independent phosphoglycerate mutase, found in Cereibacter sphaeroides (strain KD131 / KCTC 12085) (Rhodobacter sphaeroides).